The sequence spans 485 residues: Alpha-amylase (485 aa).

Positions 1-18 are cleaved as a signal peptide; that stretch reads MFLTSVLILCSLAALSLG. At Gln19 the chain carries Pyrrolidone carboxylic acid. A disulfide bond links Cys46 and Cys102. 3 residues coordinate Ca(2+): Asn116, Arg164, and Asp173. Cys152 and Cys166 are joined by a disulfide. Arg201 lines the chloride pocket. Asp203 serves as the catalytic Nucleophile. His207 contributes to the Ca(2+) binding site. The active-site Proton donor is Glu240. Chloride is bound by residues Asn303 and Arg339. A disulfide bridge connects residues Cys439 and Cys451. The N-linked (GlcNAc...) asparagine glycan is linked to Asn448.

The protein belongs to the glycosyl hydrolase 13 family. In terms of assembly, monomer. It depends on Ca(2+) as a cofactor. Requires chloride as cofactor. Expressed in larval and adult gut.

It is found in the secreted. It catalyses the reaction Endohydrolysis of (1-&gt;4)-alpha-D-glucosidic linkages in polysaccharides containing three or more (1-&gt;4)-alpha-linked D-glucose units.. This Phaedon cochleariae (Mustard beetle) protein is Alpha-amylase.